Reading from the N-terminus, the 430-residue chain is uncharacterized protein (430 aa).

12 consecutive transmembrane segments (helical) span residues 18-38 (LFLLTIGGLYSLGIALSNTFV), 49-69 (FIDLAIYNLSIVTMQPITFYL), 80-100 (VFILRFGVIFLAAFYLSVLLA), 109-129 (VLIGAVLGVGYGFYWLAFNVL), 145-165 (FMGILSSSAGMIGPIVAGFVI), 175-195 (TVIFSLSLSLFALAVVMSFFL), 235-255 (IFVFLISVFVFIETNSELALG), 256-276 (TFGLVNSAVSFFAYYFASRLI), 285-305 (ILLGGLILYGALFLILFHMSF), 307-327 (TLLTYGVFIAIGYPLLLVPYV), 353-373 (MFLNAGRIVSILCFLLIVALL), and 377-397 (VGIPLSLAILGIGHPLIYYFV). Positions 407–430 (GENETMEEDGQKRVTEPTLLKGER) are disordered. Residues 415-430 (DGQKRVTEPTLLKGER) show a composition bias toward basic and acidic residues.

Its subcellular location is the cell membrane. This is an uncharacterized protein from Bacillus subtilis (strain 168).